A 920-amino-acid chain; its full sequence is Whirlin (920 aa).

Positions 141 to 224 (LVSLRRAKAH…LVLSVYSAGR (84 aa)) constitute a PDZ 1 domain. The interval 241–262 (QGRSTSPPSSLPHGSTLRQHED) is disordered. Residues 242 to 257 (GRSTSPPSSLPHGSTL) are compositionally biased toward polar residues. The 83-residue stretch at 278–360 (KVNLVLGDGR…LILTVKDVGR (83 aa)) folds into the PDZ 2 domain. Disordered regions lie at residues 502–536 (MKARQPPGPGVGDTYSMVSYSDTGSSTGSHGTSTT), 561–603 (CETT…QGHD), 630–730 (FSAP…AMGA), and 752–828 (RALP…PTST). Residues 520–536 (SYSDTGSSTGSHGTSTT) are compositionally biased toward low complexity. Positions 561-570 (CETTQGSTNA) are enriched in polar residues. 2 stretches are compositionally biased toward pro residues: residues 589-598 (IKPPPPPPPL) and 636-651 (RSPPPPPGIAPTPTPG). Residues 655–674 (ARDSPSSPIYASISHANPSS) show a composition bias toward polar residues. A Phosphoserine modification is found at S698. Polar residues-rich tracts occupy residues 756–775 (QTRTASTLSQLSDSGQTLSE) and 785–800 (EASTSGRGRQTANTKN). Residues 802 to 813 (NGKELPQTERTT) show a composition bias toward basic and acidic residues. The PDZ 3 domain maps to 829-912 (LIRVRKSAAT…TKERDYIDFL (84 aa)).

Forms homooligomers. Interacts (via C-terminal PDZ domain) with MYO15A; this interaction is necessary for localization of WHRN to stereocilia tips. Interacts (via C-terminal PDZ domain) with MPP1/p55. Interacts with LRRC4C/NGL1. Interacts with MYO7A. Interacts with RPGR. Interacts with EPS8. Interacts with CASK. Interacts with CIB2. Component of USH2 complex, composed of ADGRV1, PDZD7, USH2A and WHRN. Interacts (via PDZ domains) with PDZD7; the interaction is direct. Interacts (via N-terminal PDZ domain) with USH2A (via cytoplasmic region). Interacts with ADGRV1/MASS1 (via cytoplasmic region). Ubiquitous. Highly expressed in heart, spleen, lung and liver. Highly expressed in brain, in the olfactory bulb, thalamus, layers III-V of the cerebral cortex and the molecular layer of cerebellum. Detected in soma and dendrites of thalamic neurons, and in cerebrum in cell bodies and apical dendrites of pyramidal neurons. Expressed in retina and inner ear.

The protein localises to the cytoplasm. The protein resides in the cell projection. It is found in the stereocilium. It localises to the growth cone. Its subcellular location is the synapse. Its function is as follows. Involved in hearing and vision as member of the USH2 complex. Necessary for elongation and maintenance of inner and outer hair cell stereocilia in the organ of Corti in the inner ear. Involved in the maintenance of the hair bundle ankle region, which connects stereocilia in cochlear hair cells of the inner ear. In retina photoreceptors, required for the maintenance of periciliary membrane complex that seems to play a role in regulating intracellular protein transport. The polypeptide is Whirlin (Rattus norvegicus (Rat)).